Consider the following 429-residue polypeptide: 5-methylthioadenosine/S-adenosylhomocysteine deaminase (429 aa).

Histidine 66 and histidine 68 together coordinate Zn(2+). Glutamate 95, arginine 147, arginine 158, and histidine 181 together coordinate substrate. Histidine 208 is a Zn(2+) binding site. Substrate-binding residues include glutamate 211 and aspartate 296. Position 296 (aspartate 296) interacts with Zn(2+).

The protein belongs to the metallo-dependent hydrolases superfamily. MTA/SAH deaminase family. It depends on Zn(2+) as a cofactor.

The catalysed reaction is S-adenosyl-L-homocysteine + H2O + H(+) = S-inosyl-L-homocysteine + NH4(+). It carries out the reaction S-methyl-5'-thioadenosine + H2O + H(+) = S-methyl-5'-thioinosine + NH4(+). Functionally, catalyzes the deamination of 5-methylthioadenosine and S-adenosyl-L-homocysteine into 5-methylthioinosine and S-inosyl-L-homocysteine, respectively. Is also able to deaminate adenosine. The polypeptide is 5-methylthioadenosine/S-adenosylhomocysteine deaminase (Caldicellulosiruptor saccharolyticus (strain ATCC 43494 / DSM 8903 / Tp8T 6331)).